A 51-amino-acid polypeptide reads, in one-letter code: Protein HokD (51 aa).

A helical transmembrane segment spans residues 5 to 25; it reads KAMLIALIVICLTVIVTALVT.

It belongs to the Hok/Gef family.

It localises to the cell inner membrane. Toxic component of a type I toxin-antitoxin (TA) system. When overexpressed kills cells within minutes; causes collapse of the transmembrane potential and arrest of respiration. Its toxic effect is probably neutralized by an antisense antitoxin Sok RNA. This is Protein HokD (hokD) from Escherichia coli O157:H7.